The following is an 88-amino-acid chain: Cytochrome c oxidase subunit 6B2 (88 aa).

Positions 1-22 (MLDVEAQEPPKGKWSTPPFDPR) are disordered. Residues 29 to 75 (IRNCYQNFLDYHRCLKTRTRRGKSTQPCEYYFRVYHSLCPISWVESW) enclose the CHCH domain. The Cx9C motif motif lies at 32–42 (CYQNFLDYHRC). Disulfide bonds link Cys-32–Cys-67 and Cys-42–Cys-56. The Cx10C motif signature appears at 56-67 (CEYYFRVYHSLC).

This sequence belongs to the cytochrome c oxidase subunit 6B family. Component of the cytochrome c oxidase (complex IV, CIV), a multisubunit enzyme composed of 14 subunits. The complex is composed of a catalytic core of 3 subunits MT-CO1, MT-CO2 and MT-CO3, encoded in the mitochondrial DNA, and 11 supernumerary subunits COX4I1 (or COX4I2), COX5A, COX5B, COX6A1 (or COX6A2), COX6B1 (or COX6B2), COX6C, COX7A2 (or COX7A1), COX7B, COX7C, COX8A and NDUFA4, which are encoded in the nuclear genome. The complex exists as a monomer or a dimer and forms supercomplexes (SCs) in the inner mitochondrial membrane with NADH-ubiquinone oxidoreductase (complex I, CI) and ubiquinol-cytochrome c oxidoreductase (cytochrome b-c1 complex, complex III, CIII), resulting in different assemblies (supercomplex SCI(1)III(2)IV(1) and megacomplex MCI(2)III(2)IV(2)). Testis specific. Weak expression in thymus and heart. Expressed in cancer cell lines.

The protein resides in the mitochondrion inner membrane. The protein operates within energy metabolism; oxidative phosphorylation. In terms of biological role, component of the cytochrome c oxidase, the last enzyme in the mitochondrial electron transport chain which drives oxidative phosphorylation. The respiratory chain contains 3 multisubunit complexes succinate dehydrogenase (complex II, CII), ubiquinol-cytochrome c oxidoreductase (cytochrome b-c1 complex, complex III, CIII) and cytochrome c oxidase (complex IV, CIV), that cooperate to transfer electrons derived from NADH and succinate to molecular oxygen, creating an electrochemical gradient over the inner membrane that drives transmembrane transport and the ATP synthase. Cytochrome c oxidase is the component of the respiratory chain that catalyzes the reduction of oxygen to water. Electrons originating from reduced cytochrome c in the intermembrane space (IMS) are transferred via the dinuclear copper A center (CU(A)) of subunit 2 and heme A of subunit 1 to the active site in subunit 1, a binuclear center (BNC) formed by heme A3 and copper B (CU(B)). The BNC reduces molecular oxygen to 2 water molecules using 4 electrons from cytochrome c in the IMS and 4 protons from the mitochondrial matrix. This is Cytochrome c oxidase subunit 6B2 (COX6B2) from Homo sapiens (Human).